A 474-amino-acid polypeptide reads, in one-letter code: tRNA-2-methylthio-N(6)-dimethylallyladenosine synthase (474 aa).

The 118-residue stretch at 3–120 (QKLHIKTWGC…LPEMINQIRG (118 aa)) folds into the MTTase N-terminal domain. C12, C49, C83, C157, C161, and C164 together coordinate [4Fe-4S] cluster. Positions 143-375 (RAEGPTAFVS…QQRINNQAAQ (233 aa)) constitute a Radical SAM core domain. Residues 378-441 (RAMLGTEQRV…TNSLRGEVVR (64 aa)) form the TRAM domain.

Belongs to the methylthiotransferase family. MiaB subfamily. In terms of assembly, monomer. [4Fe-4S] cluster serves as cofactor.

Its subcellular location is the cytoplasm. It catalyses the reaction N(6)-dimethylallyladenosine(37) in tRNA + (sulfur carrier)-SH + AH2 + 2 S-adenosyl-L-methionine = 2-methylsulfanyl-N(6)-dimethylallyladenosine(37) in tRNA + (sulfur carrier)-H + 5'-deoxyadenosine + L-methionine + A + S-adenosyl-L-homocysteine + 2 H(+). Its function is as follows. Catalyzes the methylthiolation of N6-(dimethylallyl)adenosine (i(6)A), leading to the formation of 2-methylthio-N6-(dimethylallyl)adenosine (ms(2)i(6)A) at position 37 in tRNAs that read codons beginning with uridine. The sequence is that of tRNA-2-methylthio-N(6)-dimethylallyladenosine synthase from Pasteurella multocida (strain Pm70).